The sequence spans 383 residues: Probable disease resistance protein At4g19060 (383 aa).

Residues 36–84 (YEKWSSGKQRGSSSKHGNQSTHGDSSPTRNSSGSSKKGRPKANRVETSS) form a disordered region. The span at 41–70 (SGKQRGSSSKHGNQSTHGDSSPTRNSSGSS) shows a compositional bias: polar residues. NB-ARC domains follow at residues 75–184 (PKAN…MFKH) and 207–281 (VKEK…LAKA). 121 to 128 (GKYGVGKT) provides a ligand contact to ATP.

In terms of biological role, possible disease resistance protein. In Arabidopsis thaliana (Mouse-ear cress), this protein is Probable disease resistance protein At4g19060.